We begin with the raw amino-acid sequence, 389 residues long: Succinyl-diaminopimelate desuccinylase (389 aa).

Histidine 72 lines the Zn(2+) pocket. Aspartate 74 is an active-site residue. A Zn(2+)-binding site is contributed by aspartate 105. The active-site Proton acceptor is glutamate 144. Residues glutamate 145, glutamate 173, and histidine 362 each coordinate Zn(2+).

The protein belongs to the peptidase M20A family. DapE subfamily. In terms of assembly, homodimer. The cofactor is Zn(2+). Co(2+) serves as cofactor.

It catalyses the reaction N-succinyl-(2S,6S)-2,6-diaminopimelate + H2O = (2S,6S)-2,6-diaminopimelate + succinate. The protein operates within amino-acid biosynthesis; L-lysine biosynthesis via DAP pathway; LL-2,6-diaminopimelate from (S)-tetrahydrodipicolinate (succinylase route): step 3/3. Functionally, catalyzes the hydrolysis of N-succinyl-L,L-diaminopimelic acid (SDAP), forming succinate and LL-2,6-diaminopimelate (DAP), an intermediate involved in the bacterial biosynthesis of lysine and meso-diaminopimelic acid, an essential component of bacterial cell walls. In Nitrobacter hamburgensis (strain DSM 10229 / NCIMB 13809 / X14), this protein is Succinyl-diaminopimelate desuccinylase.